The following is a 293-amino-acid chain: Aminodeoxychorismate lyase (293 aa).

Lys146 is subject to N6-(pyridoxal phosphate)lysine.

This sequence belongs to the class-IV pyridoxal-phosphate-dependent aminotransferase family. Homodimer. The cofactor is pyridoxal 5'-phosphate.

The catalysed reaction is 4-amino-4-deoxychorismate = 4-aminobenzoate + pyruvate + H(+). Its pathway is cofactor biosynthesis; tetrahydrofolate biosynthesis; 4-aminobenzoate from chorismate: step 2/2. Its function is as follows. Involved in the biosynthesis of p-aminobenzoate (PABA), a precursor of tetrahydrofolate. Converts 4-amino-4-deoxychorismate into 4-aminobenzoate (PABA) and pyruvate. The chain is Aminodeoxychorismate lyase from Bacillus subtilis (strain 168).